The following is a 206-amino-acid chain: Sclerostin domain-containing protein 1 (206 aa).

The N-terminal stretch at 1 to 23 is a signal peptide; sequence MLPPAIHLSLIPLLCILMKNCLA. A disordered region spans residues 42–62; that stretch reads AHPSSNSTLNQARNGGRHFSS. Residues 43–62 are compositionally biased toward polar residues; that stretch reads HPSSNSTLNQARNGGRHFSS. The N-linked (GlcNAc...) asparagine glycan is linked to Asn47. 4 disulfides stabilise this stretch: Cys75–Cys133, Cys89–Cys147, Cys100–Cys163, and Cys104–Cys165. Residues 75–170 form the CTCK domain; it reads CRELRSTKYI…TACKCKRYTR (96 aa). N-linked (GlcNAc...) asparagine glycosylation occurs at Asn173. Residues 176–206 form a disordered region; the sequence is SHNFESVSPAKPAQHHRERKRASKSSKHSLS. Positions 188 to 206 are enriched in basic residues; it reads AQHHRERKRASKSSKHSLS.

Belongs to the sclerostin family. As to quaternary structure, interacts with BMP2, BMP4, BMP6 and BMP7 with high affinity. As to expression, highly expressed within the maximally sensitized/receptive endometrium. Weakly expressed in brain, kidney and the female reproductive tract. Expressed in the dermal papilla (DP) and at high level in the precortex of both anagen vibrissae and pelage follicles. Dynymic expression during the hair cycle.

The protein resides in the secreted. Directly antagonizes activity of BMP2, BMP4, BMP6 and BMP7 in a dose-dependent manner. May be involved in the onset of endometrial receptivity for implantation/sensitization for the decidual cell reaction. Enhances Wnt signaling and inhibits TGF-beta signaling. This chain is Sclerostin domain-containing protein 1 (Sostdc1), found in Rattus norvegicus (Rat).